The following is a 277-amino-acid chain: UPF0276 protein PP_2398 (277 aa).

The protein belongs to the UPF0276 family.

This Pseudomonas putida (strain ATCC 47054 / DSM 6125 / CFBP 8728 / NCIMB 11950 / KT2440) protein is UPF0276 protein PP_2398.